Here is a 379-residue protein sequence, read N- to C-terminus: Cytochrome b (379 aa).

The next 4 helical transmembrane spans lie at 33 to 53, 77 to 98, 113 to 133, and 178 to 198; these read FGSL…FLAM, WLIR…FIHV, WNIG…GYVL, and FFAF…VHLL. Heme b is bound by residues H83 and H97. Positions 182 and 196 each coordinate heme b. An a ubiquinone-binding site is contributed by H201. 4 helical membrane-spanning segments follow: residues 226-246, 288-308, 320-340, and 347-367; these read IKDL…ALFF, LGGV…PLLN, VTQT…WIGG, and FTTI…ILIP.

It belongs to the cytochrome b family. As to quaternary structure, the cytochrome bc1 complex contains 11 subunits: 3 respiratory subunits (MT-CYB, CYC1 and UQCRFS1), 2 core proteins (UQCRC1 and UQCRC2) and 6 low-molecular weight proteins (UQCRH/QCR6, UQCRB/QCR7, UQCRQ/QCR8, UQCR10/QCR9, UQCR11/QCR10 and a cleavage product of UQCRFS1). This cytochrome bc1 complex then forms a dimer. Heme b serves as cofactor.

The protein resides in the mitochondrion inner membrane. Its function is as follows. Component of the ubiquinol-cytochrome c reductase complex (complex III or cytochrome b-c1 complex) that is part of the mitochondrial respiratory chain. The b-c1 complex mediates electron transfer from ubiquinol to cytochrome c. Contributes to the generation of a proton gradient across the mitochondrial membrane that is then used for ATP synthesis. In Akodon lindberghi (Lindbergh's grass mouse), this protein is Cytochrome b (MT-CYB).